A 339-amino-acid chain; its full sequence is Glyceraldehyde-3-phosphate dehydrogenase (339 aa).

Residues 12-13 (RI), aspartate 34, arginine 78, and threonine 120 contribute to the NAD(+) site. D-glyceraldehyde 3-phosphate-binding positions include 149 to 151 (SCT), threonine 180, 209 to 210 (TG), and arginine 232. Residue cysteine 150 is the Nucleophile of the active site. Asparagine 319 contacts NAD(+).

This sequence belongs to the glyceraldehyde-3-phosphate dehydrogenase family. In terms of assembly, homotetramer.

The protein resides in the cytoplasm. The catalysed reaction is D-glyceraldehyde 3-phosphate + phosphate + NAD(+) = (2R)-3-phospho-glyceroyl phosphate + NADH + H(+). It participates in carbohydrate degradation; glycolysis; pyruvate from D-glyceraldehyde 3-phosphate: step 1/5. In terms of biological role, catalyzes the oxidative phosphorylation of glyceraldehyde 3-phosphate (G3P) to 1,3-bisphosphoglycerate (BPG) using the cofactor NAD. The first reaction step involves the formation of a hemiacetal intermediate between G3P and a cysteine residue, and this hemiacetal intermediate is then oxidized to a thioester, with concomitant reduction of NAD to NADH. The reduced NADH is then exchanged with the second NAD, and the thioester is attacked by a nucleophilic inorganic phosphate to produce BPG. The protein is Glyceraldehyde-3-phosphate dehydrogenase (gapA) of Haemophilus influenzae (strain ATCC 51907 / DSM 11121 / KW20 / Rd).